A 211-amino-acid polypeptide reads, in one-letter code: Small ribosomal subunit protein eS1 (211 aa).

The disordered stretch occupies residues 192 to 211 (NGLPPYEAVGDRATPELASY).

The protein belongs to the eukaryotic ribosomal protein eS1 family.

The polypeptide is Small ribosomal subunit protein eS1 (Methanopyrus kandleri (strain AV19 / DSM 6324 / JCM 9639 / NBRC 100938)).